A 198-amino-acid chain; its full sequence is Recombination protein RecR (198 aa).

The segment at 56–71 adopts a C4-type zinc-finger fold; sequence CDTCGNVDTQNPCGIC. The 96-residue stretch at 79–174 folds into the Toprim domain; it reads KSICVVEDVA…RITQLAHGLP (96 aa).

This sequence belongs to the RecR family.

Its function is as follows. May play a role in DNA repair. It seems to be involved in an RecBC-independent recombinational process of DNA repair. It may act with RecF and RecO. This Erythrobacter litoralis (strain HTCC2594) protein is Recombination protein RecR.